Here is a 322-residue protein sequence, read N- to C-terminus: Beta-1,3-galactosyltransferase bre-5 (322 aa).

Over 1 to 16 (MFLCVRILKRKYHELS) the chain is Cytoplasmic. A helical; Signal-anchor for type II membrane protein transmembrane segment spans residues 17–37 (SFQKLLIFTITIFLLWVLGVV). Topologically, residues 38–322 (DKFRETSFGD…YEYSQLNGFE (285 aa)) are lumenal. The N-linked (GlcNAc...) asparagine glycan is linked to Asn150.

This sequence belongs to the glycosyltransferase 31 family. As to expression, expressed in the gut.

The protein localises to the golgi apparatus membrane. Its pathway is protein modification; protein glycosylation. Its function is as follows. Transfers N-acetylgalactosamine onto mannose groups of carbohydrate substrates. Required for susceptibility to pore-forming crystal toxins in conjunction with bre-1, bre-2, bre-3, and bre-4. Involved in resistance to the nematotoxic C.cinerea galectin Cgl2. The protein is Beta-1,3-galactosyltransferase bre-5 of Caenorhabditis elegans.